The primary structure comprises 138 residues: Ribosomal RNA large subunit methyltransferase H (138 aa).

Residues glycine 86 and 105–110 each bind S-adenosyl-L-methionine; that span reads LSPLTF.

This sequence belongs to the RNA methyltransferase RlmH family. As to quaternary structure, homodimer.

It localises to the cytoplasm. It carries out the reaction pseudouridine(1915) in 23S rRNA + S-adenosyl-L-methionine = N(3)-methylpseudouridine(1915) in 23S rRNA + S-adenosyl-L-homocysteine + H(+). In terms of biological role, specifically methylates the pseudouridine at position 1915 (m3Psi1915) in 23S rRNA. The chain is Ribosomal RNA large subunit methyltransferase H from Prochlorococcus marinus (strain MIT 9215).